The chain runs to 730 residues: uncharacterized protein (730 aa).

Residues serine 82 and serine 89 each carry the phosphoserine modification. Disordered stretches follow at residues serine 82 to tyrosine 114 and asparagine 447 to glutamate 468. Over residues serine 89–asparagine 98 the composition is skewed to polar residues. Residues asparagine 449 to asparagine 460 show a composition bias toward low complexity. Phosphoserine is present on residues serine 483 and serine 651.

This is an uncharacterized protein from Saccharomyces cerevisiae (strain ATCC 204508 / S288c) (Baker's yeast).